A 713-amino-acid chain; its full sequence is Zinc finger and BTB domain-containing protein 1 (713 aa).

Lys3 participates in a covalent cross-link: Glycyl lysine isopeptide (Lys-Gly) (interchain with G-Cter in SUMO2). Residues 24-91 form the BTB domain; the sequence is CDCCIAIDDI…MYLGKIMTAP (68 aa). Glycyl lysine isopeptide (Lys-Gly) (interchain with G-Cter in SUMO2) cross-links involve residues Lys200 and Lys205. Residues 216 to 242 form a C2H2-type 1; atypical zinc finger; the sequence is FTCDSCGFGFSCEKLLDEHVLTCTNRH. Residues Lys261, Lys266, Lys276, Lys284, Lys304, Lys316, Lys328, Lys340, and Lys346 each participate in a glycyl lysine isopeptide (Lys-Gly) (interchain with G-Cter in SUMO2) cross-link. The interval 270 to 319 is disordered; it reads AEKDSSKTFSAQPDKYREDANQAPDDSASTTGSRKSTVEAGIAGEEKSRA. Ser355 is subject to Phosphoserine. Thr356 is subject to Phosphothreonine. Lys381 is covalently cross-linked (Glycyl lysine isopeptide (Lys-Gly) (interchain with G-Cter in SUMO2)). Residues 448–470 form a C2H2-type 2; atypical zinc finger; that stretch reads CACGKCGQILVKGRQLQEHAQRC. Lys528 is covalently cross-linked (Glycyl lysine isopeptide (Lys-Gly) (interchain with G-Cter in SUMO2)). The UBZ-type zinc-finger motif lies at 533-558; it reads PFRCPNCGQRFETENLVVEHMSSCLD. A Glycyl lysine isopeptide (Lys-Gly) (interchain with G-Cter in SUMO2) cross-link involves residue Lys563. 5 C2H2-type zinc fingers span residues 578–600, 606–628, 634–656, 662–684, and 686–709; these read HFCN…YTVH, FVCQ…NDMH, YVCS…MISH, TICQ…MDVH, and YTCG…NAKH.

In terms of assembly, homodimer. Homodimer. Interacts (via BTB domain) with TRIM28 (unphosphorylated or phosphorylated form). In terms of processing, sumoylated with SUMO2 at Lys-328 and to a lesser extent at Lys-266. Sumoylation inhibits its transcriptional repression activity and regulates its subcellular localization. Expressed strongly in thymus and spleen, less in lymph nodes and peripheral blood mononuclear cells (PBMCs) and weakly in bone marrow. Strongly expressed in immature, but weakly in mature bone marrow-lymphocyte B.

The protein resides in the nucleus. It is found in the nucleoplasm. Functionally, acts as a transcriptional repressor. Represses cAMP-responsive element (CRE)-mediated transcriptional activation. In addition, has a role in translesion DNA synthesis. Requires for UV-inducible RAD18 loading, PCNA monoubiquitination, POLH recruitment to replication factories and efficient translesion DNA synthesis. Plays a key role in the transcriptional regulation of T lymphocyte development. This is Zinc finger and BTB domain-containing protein 1 (Zbtb1) from Mus musculus (Mouse).